Consider the following 674-residue polypeptide: tRNA wybutosine-synthesizing protein 4 (674 aa).

Residues Arg84, Gly109, Asp140, 184–185 (DL), and Glu212 each bind S-adenosyl-L-methionine.

It belongs to the methyltransferase superfamily. LCMT family.

The enzyme catalyses 7-[(3S)-3-amino-3-carboxypropyl]wyosine(37) in tRNA(Phe) + S-adenosyl-L-methionine = 7-[(3S)-(3-amino-3-methoxycarbonyl)propyl]wyosine(37) in tRNA(Phe) + S-adenosyl-L-homocysteine. The catalysed reaction is 7-[(3S)-(3-amino-3-methoxycarbonyl)propyl]wyosine(37) in tRNA(Phe) + S-adenosyl-L-methionine + CO2 = wybutosine(37) in tRNA(Phe) + S-adenosyl-L-homocysteine + 2 H(+). The protein operates within tRNA modification; wybutosine-tRNA(Phe) biosynthesis. Functionally, probable S-adenosyl-L-methionine-dependent methyltransferase that acts as a component of the wybutosine biosynthesis pathway. Wybutosine is a hyper modified guanosine with a tricyclic base found at the 3'-position adjacent to the anticodon of eukaryotic phenylalanine tRNA. May methylate the carboxyl group of leucine residues to form alpha-leucine ester residues. In Candida glabrata (strain ATCC 2001 / BCRC 20586 / JCM 3761 / NBRC 0622 / NRRL Y-65 / CBS 138) (Yeast), this protein is tRNA wybutosine-synthesizing protein 4 (PPM2).